The primary structure comprises 313 residues: Nucleoside diphosphate-linked moiety X motif 6 (313 aa).

The Nudix hydrolase domain occupies 138-270 (THQVGVAGAV…TSRVARLLLY (133 aa)).

It belongs to the Nudix hydrolase family. In terms of assembly, monomer and homodimer.

It is found in the cytoplasm. The protein localises to the nucleus. It localises to the mitochondrion. May contribute to the regulation of cell proliferation. The chain is Nucleoside diphosphate-linked moiety X motif 6 (Nudt6) from Mus musculus (Mouse).